The primary structure comprises 319 residues: Thioredoxin reductase (319 aa).

37–44 (ERGVPGGQ) serves as a coordination point for FAD. Residues Cys-136 and Cys-139 are joined by a disulfide bond. 279–288 (DVRAKSLRQI) is a binding site for FAD.

Belongs to the class-II pyridine nucleotide-disulfide oxidoreductase family. In terms of assembly, homodimer. FAD is required as a cofactor.

Its subcellular location is the cytoplasm. The catalysed reaction is [thioredoxin]-dithiol + NADP(+) = [thioredoxin]-disulfide + NADPH + H(+). The sequence is that of Thioredoxin reductase (trxB) from Listeria innocua serovar 6a (strain ATCC BAA-680 / CLIP 11262).